A 558-amino-acid chain; its full sequence is Pentatricopeptide repeat-containing protein At1g06140, mitochondrial (558 aa).

The transit peptide at 1–79 directs the protein to the mitochondrion; the sequence is MLPVNRARAL…RNRHSWNTIL (79 aa). PPR repeat units lie at residues 38–68, 71–103, 108–142, 143–173, 174–208, 209–243, 245–275, 276–310, 311–345, 346–376, 377–411, 412–447, and 448–482; these read EVVL…IPCW, NRHS…MRRH, DSFN…GLDK, DDYV…IPVR, NSVL…GLAL, DALT…SFID, SDYL…SVDR, NVVM…SILP, NQCT…GIEM, DAVN…MPER, NVIS…NVVP, NSVT…GVVP, and EEEH…PMAS. A type E motif region spans residues 483 to 558; sequence AWGALLSACR…HVGQSATEVG (76 aa).

The protein belongs to the PPR family. PCMP-E subfamily.

The protein resides in the mitochondrion. This Arabidopsis thaliana (Mouse-ear cress) protein is Pentatricopeptide repeat-containing protein At1g06140, mitochondrial (PCMP-E61).